A 398-amino-acid polypeptide reads, in one-letter code: Probable RNA methyltransferase sce1580 (398 aa).

The segment at 1–24 (MRVPEIPEETASPLRAGDPPAQVA) is disordered. The Proton acceptor role is filled by Glu-140. The Radical SAM core domain maps to 146 to 378 (GPARTTLCVS…TLVRRPRGRD (233 aa)). A disulfide bond links Cys-153 and Cys-383. Residues Cys-160, Cys-164, and Cys-167 each coordinate [4Fe-4S] cluster. S-adenosyl-L-methionine is bound by residues 211–212 (GE), Ser-243, 265–267 (SLN), and Asn-340. The active-site S-methylcysteine intermediate is Cys-383.

The protein belongs to the radical SAM superfamily. RlmN family. The cofactor is [4Fe-4S] cluster.

The protein resides in the cytoplasm. The chain is Probable RNA methyltransferase sce1580 from Sorangium cellulosum (strain So ce56) (Polyangium cellulosum (strain So ce56)).